We begin with the raw amino-acid sequence, 424 residues long: Probable ribonuclease FAU-1 (424 aa).

It belongs to the FAU-1 family.

In terms of biological role, probable RNase involved in rRNA stability through maturation and/or degradation of precursor rRNAs. Binds to RNA in loop regions with AU-rich sequences. This chain is Probable ribonuclease FAU-1, found in Saccharolobus islandicus (strain Y.G.57.14 / Yellowstone #1) (Sulfolobus islandicus).